The primary structure comprises 197 residues: Histone chaperone asf1b-A (197 aa).

It belongs to the ASF1 family. In terms of assembly, interacts with histone H3 and histone H4.

It is found in the nucleus. Functionally, histone chaperone that facilitates histone deposition and histone exchange and removal during nucleosome assembly and disassembly. This chain is Histone chaperone asf1b-A (asf1ba), found in Danio rerio (Zebrafish).